Reading from the N-terminus, the 334-residue chain is Transposase for insertion sequence element IS1328 (334 aa).

It belongs to the transposase IS1111A/IS1328/IS1533 family.

Functionally, required for the transposition of the insertion element. The sequence is that of Transposase for insertion sequence element IS1328 from Yersinia enterocolitica.